The primary structure comprises 437 residues: Elongation factor 1-gamma (437 aa).

The residue at position 2 (Ala2) is an N-acetylalanine. The region spanning 2-87 is the GST N-terminal domain; it reads AAGTLYTYPE…YVSNEELRGS (86 aa). The GST C-terminal domain occupies 88 to 216; the sequence is TPEAAAQVVQ…VKLCEKMAQF (129 aa). N6-acetyllysine occurs at positions 147 and 212. The segment covering 221 to 254 has biased composition (basic and acidic residues); that stretch reads FAESQPKKDTPRKEKGSREEKQKPQTERKEEKKA. Residues 221-268 form a disordered region; that stretch reads FAESQPKKDTPRKEKGSREEKQKPQTERKEEKKAAAPAPEEEMDECEQ. Lys253 participates in a covalent cross-link: Glycyl lysine isopeptide (Lys-Gly) (interchain with G-Cter in SUMO1). One can recognise an EF-1-gamma C-terminal domain in the interval 276–437; sequence AKDPFAHLPK…KAVNQGKIFK (162 aa). A Glycyl lysine isopeptide (Lys-Gly) (interchain with G-Cter in SUMO2) cross-link involves residue Lys285. Lys401 is subject to N6-acetyllysine. An N6-acetyllysine; alternate modification is found at Lys434. N6-malonyllysine; alternate is present on Lys434.

EF-1 is composed of four subunits: alpha, beta, delta, and gamma.

Functionally, probably plays a role in anchoring the complex to other cellular components. This chain is Elongation factor 1-gamma (Eef1g), found in Rattus norvegicus (Rat).